The chain runs to 294 residues: 2-hydroxy-3-oxopropionate reductase (294 aa).

NAD(+)-binding positions include 4-18 (GFIGLGIMGKPMSKN) and serine 95. Lysine 170 is a catalytic residue. Residue lysine 238 participates in NAD(+) binding.

Belongs to the HIBADH-related family. 2-hydroxy-3-oxopropionate reductase subfamily.

The catalysed reaction is (R)-glycerate + NADP(+) = 2-hydroxy-3-oxopropanoate + NADPH + H(+). The enzyme catalyses (R)-glycerate + NAD(+) = 2-hydroxy-3-oxopropanoate + NADH + H(+). It functions in the pathway carbohydrate acid metabolism; galactarate degradation; D-glycerate from galactarate: step 3/3. Catalyzes the reduction of tatronate semialdehyde to D-glycerate. This Escherichia coli O6:H1 (strain CFT073 / ATCC 700928 / UPEC) protein is 2-hydroxy-3-oxopropionate reductase.